Reading from the N-terminus, the 641-residue chain is Sodium-dependent nutrient amino acid transporter 1 (641 aa).

The disordered stretch occupies residues 1–36 (MELKGVQPSNGSANGNGTTNAASTEKTDAEKHTPER). Residues 1-38 (MELKGVQPSNGSANGNGTTNAASTEKTDAEKHTPERTN) lie on the Cytoplasmic side of the membrane. A compositionally biased stretch (low complexity) spans 9–24 (SNGSANGNGTTNAAST). Residues 25–35 (EKTDAEKHTPE) are compositionally biased toward basic and acidic residues. 3 helical membrane passes run 39–59 (WGNG…LGNV), 72–92 (GAFL…MYYL), and 109–129 (SVVP…ICII). Asparagine 183 and asparagine 188 each carry an N-linked (GlcNAc...) asparagine glycan. 9 consecutive transmembrane segments (helical) span residues 229–249 (PDWK…LVIM), 258–278 (AAYF…IRAV), 307–327 (AVVQ…MFAS), 341–361 (IVTT…FAIL), 401–421 (LFSV…IVAL), 441–461 (VALI…TPGG), 474–494 (TYVV…VYGL), 516–536 (CWSF…MVTI), and 552–572 (IAGW…GLWY).

The protein belongs to the sodium:neurotransmitter symporter (SNF) (TC 2.A.22) family.

It localises to the membrane. In terms of biological role, unusual broad substrate spectrum amino acid:sodium cotransporter that promotes absorption of the D isomers of essential amino acids. Neutral amino acids are the preferred substrates, especially methionine and phenylalanine. The chain is Sodium-dependent nutrient amino acid transporter 1 from Drosophila erecta (Fruit fly).